The chain runs to 463 residues: Glycerol-3-phosphate acyltransferase, chloroplastic (463 aa).

The N-terminal 91 residues, 1–91, are a transit peptide targeting the chloroplast; that stretch reads MSIFFSPSSP…AATQPSAGSD (91 aa). Disordered regions lie at residues 18 to 37 and 65 to 95; these read NANP…TPPL and AETV…HGHS. 2 stretches are compositionally biased toward low complexity: residues 24–37 and 74–90; these read SPSS…TPPL and PSPS…SAGS. The HXXXXD motif motif lies at 229–234; that stretch reads HQTEAD.

Belongs to the GPAT/DAPAT family.

It is found in the plastid. The protein localises to the chloroplast stroma. It catalyses the reaction sn-glycerol 3-phosphate + an acyl-CoA = a 1-acyl-sn-glycero-3-phosphate + CoA. It functions in the pathway phospholipid metabolism; CDP-diacylglycerol biosynthesis; CDP-diacylglycerol from sn-glycerol 3-phosphate: step 1/3. Functionally, esterifies acyl-group from acyl-ACP to the sn-1 position of glycerol-3-phosphate. The enzyme from chilling-resistant plants discriminates against non-fluid palmitic acid and selects oleic acid whereas the enzyme from sensitive plants accepts both fatty acids. The polypeptide is Glycerol-3-phosphate acyltransferase, chloroplastic (Carthamus tinctorius (Safflower)).